We begin with the raw amino-acid sequence, 536 residues long: T-complex protein 1 subunit delta (536 aa).

Residues 1–21 (MAAVAAPMASKPRGSKAESFV) form a disordered region.

It belongs to the TCP-1 chaperonin family. In terms of assembly, heterooligomeric complex of about 850 to 900 kDa that forms two stacked rings, 12 to 16 nm in diameter.

The protein localises to the cytoplasm. Functionally, molecular chaperone; assists the folding of proteins upon ATP hydrolysis. Known to play a role, in vitro, in the folding of actin and tubulin. The protein is T-complex protein 1 subunit delta of Arabidopsis thaliana (Mouse-ear cress).